The chain runs to 176 residues: RNA pyrophosphohydrolase (176 aa).

The Nudix hydrolase domain maps to 6 to 149; it reads GYRPNVGIVI…KRDVYRRVMK (144 aa). Positions 38-59 match the Nudix box motif; sequence GGINPGESAEQAMYRELFEEVG.

The protein belongs to the Nudix hydrolase family. RppH subfamily. It depends on a divalent metal cation as a cofactor.

Functionally, accelerates the degradation of transcripts by removing pyrophosphate from the 5'-end of triphosphorylated RNA, leading to a more labile monophosphorylated state that can stimulate subsequent ribonuclease cleavage. In Escherichia fergusonii (strain ATCC 35469 / DSM 13698 / CCUG 18766 / IAM 14443 / JCM 21226 / LMG 7866 / NBRC 102419 / NCTC 12128 / CDC 0568-73), this protein is RNA pyrophosphohydrolase.